Here is a 476-residue protein sequence, read N- to C-terminus: Bifunctional protein HldE (476 aa).

Residues 1-318 (MAQYSAEFKQ…ENAIHARPET (318 aa)) form a ribokinase region. 195-198 (NMSE) is a binding site for ATP. Asp-264 is an active-site residue. A cytidylyltransferase region spans residues 344–476 (MTNGCFDILH…VIEKIKLLKD (133 aa)).

It in the N-terminal section; belongs to the carbohydrate kinase PfkB family. This sequence in the C-terminal section; belongs to the cytidylyltransferase family. Homodimer.

It catalyses the reaction D-glycero-beta-D-manno-heptose 7-phosphate + ATP = D-glycero-beta-D-manno-heptose 1,7-bisphosphate + ADP + H(+). It carries out the reaction D-glycero-beta-D-manno-heptose 1-phosphate + ATP + H(+) = ADP-D-glycero-beta-D-manno-heptose + diphosphate. The protein operates within nucleotide-sugar biosynthesis; ADP-L-glycero-beta-D-manno-heptose biosynthesis; ADP-L-glycero-beta-D-manno-heptose from D-glycero-beta-D-manno-heptose 7-phosphate: step 1/4. It participates in nucleotide-sugar biosynthesis; ADP-L-glycero-beta-D-manno-heptose biosynthesis; ADP-L-glycero-beta-D-manno-heptose from D-glycero-beta-D-manno-heptose 7-phosphate: step 3/4. Its function is as follows. Catalyzes the phosphorylation of D-glycero-D-manno-heptose 7-phosphate at the C-1 position to selectively form D-glycero-beta-D-manno-heptose-1,7-bisphosphate. Functionally, catalyzes the ADP transfer from ATP to D-glycero-beta-D-manno-heptose 1-phosphate, yielding ADP-D-glycero-beta-D-manno-heptose. This chain is Bifunctional protein HldE, found in Haemophilus influenzae (strain PittGG).